Consider the following 369-residue polypeptide: 2-aminoethylphosphonate--pyruvate transaminase (369 aa).

K193 is modified (N6-(pyridoxal phosphate)lysine).

This sequence belongs to the class-V pyridoxal-phosphate-dependent aminotransferase family. PhnW subfamily. In terms of assembly, homodimer. It depends on pyridoxal 5'-phosphate as a cofactor.

The enzyme catalyses (2-aminoethyl)phosphonate + pyruvate = phosphonoacetaldehyde + L-alanine. Involved in phosphonate degradation. This Burkholderia thailandensis (strain ATCC 700388 / DSM 13276 / CCUG 48851 / CIP 106301 / E264) protein is 2-aminoethylphosphonate--pyruvate transaminase.